The sequence spans 643 residues: ATP-dependent RNA helicase DeaD (643 aa).

The Q motif motif lies at 6-34 (TTFADLGLKAPILEALTDLGYEKPSPIQA). The 172-residue stretch at 37–208 (IPHLLDGRDV…RRFMKEPQEV (172 aa)) folds into the Helicase ATP-binding domain. 50 to 57 (AQTGSGKT) is a binding site for ATP. The short motif at 156–159 (DEAD) is the DEAD box element. The 148-residue stretch at 232 to 379 (KNEALVRFLE…EVELPNAELL (148 aa)) folds into the Helicase C-terminal domain. Disordered stretches follow at residues 440 to 482 (VPPV…KRER) and 557 to 643 (MNMQ…GGDA). Basic and acidic residues-rich tracts occupy residues 448 to 482 (PRRE…KRER) and 567 to 643 (PRTE…GGDA).

This sequence belongs to the DEAD box helicase family. DeaD/CsdA subfamily.

It is found in the cytoplasm. The catalysed reaction is ATP + H2O = ADP + phosphate + H(+). Functionally, DEAD-box RNA helicase involved in various cellular processes at low temperature, including ribosome biogenesis, mRNA degradation and translation initiation. The protein is ATP-dependent RNA helicase DeaD of Klebsiella pneumoniae.